The primary structure comprises 362 residues: Endopolygalacturonase II (362 aa).

An N-terminal signal peptide occupies residues M1–A21. Positions S22 to R27 are excised as a propeptide. C30 and C45 are joined by a disulfide. The PbH1 1 repeat unit spans residues A156–N186. D201 (proton donor) is an active-site residue. C203 and C219 are joined by a disulfide. H223 is a catalytic residue. 3 PbH1 repeats span residues V238–T259, V267–Q289, and T301–A322. N240 is a glycosylation site (N-linked (GlcNAc...) (high mannose) asparagine). Disulfide bonds link C329–C334 and C353–C362.

The protein belongs to the glycosyl hydrolase 28 family.

The protein resides in the secreted. The enzyme catalyses (1,4-alpha-D-galacturonosyl)n+m + H2O = (1,4-alpha-D-galacturonosyl)n + (1,4-alpha-D-galacturonosyl)m.. Its function is as follows. Involved in maceration and soft-rotting of plant tissue. Hydrolyzes the 1,4-alpha glycosidic bonds of de-esterified pectate in the smooth region of the plant cell wall. This chain is Endopolygalacturonase II, found in Aspergillus niger.